The chain runs to 526 residues: Probable carboxypeptidase 2 (526 aa).

A signal peptide spans 1 to 21 (MVAYRLLALISLGLGSHCASA). The N-linked (GlcNAc...) asparagine glycan is linked to Asn46. Residues 53-76 (PAFTSPGTVPRGFSDGTSGPTRDE) form a disordered region. A Peptidase M14 domain is found at 71 to 351 (GPTRDETMEG…VMAKSILQTA (281 aa)). Asn116 carries N-linked (GlcNAc...) asparagine glycosylation. Zn(2+) is bound by residues His136, Glu139, and His224. Glu322 functions as the Proton donor/acceptor in the catalytic mechanism. 2 N-linked (GlcNAc...) asparagine glycosylation sites follow: Asn393 and Asn459.

Belongs to the peptidase M14 family. Requires Zn(2+) as cofactor.

It is found in the secreted. In terms of biological role, extracellular metalloprotease that contributes to pathogenicity. This is Probable carboxypeptidase 2 (MCPB) from Arthroderma benhamiae (strain ATCC MYA-4681 / CBS 112371) (Trichophyton mentagrophytes).